Consider the following 2092-residue polypeptide: RNA-directed RNA polymerase L (2092 aa).

The interval 18–215 (VPIKHFDCTM…ELSSTDEELG (198 aa)) is endonuclease. Mn(2+) contacts are provided by histidine 79, aspartate 111, and glutamate 125. Residue lysine 143 is the For endonuclease activity of the active site. The RdRp catalytic domain occupies 975 to 1166 (ARKQCKGPVW…AICFRMKKEL (192 aa)). Aspartate 1134 contacts Mg(2+). Residues 1706-1822 (GAGTVGGFIK…PFGCPVYIIK (117 aa)) are cap-binding.

It belongs to the Bunyavirales RNA polymerase family. In terms of assembly, homomultimer. Interacts with glycoprotein N; this interaction allows efficient polymerase packaging into virus particles. Interacts with nucleoprotein N. Mn(2+) serves as cofactor. Mg(2+) is required as a cofactor.

It localises to the host Golgi apparatus. The protein localises to the host endoplasmic reticulum. The protein resides in the host endoplasmic reticulum-Golgi intermediate compartment. It is found in the virion. It carries out the reaction RNA(n) + a ribonucleoside 5'-triphosphate = RNA(n+1) + diphosphate. Functionally, RNA-dependent RNA polymerase, which is responsible for the replication and transcription of the viral RNA genome using antigenomic RNA as an intermediate. During transcription, synthesizes subgenomic RNAs and assures their capping by a cap-snatching mechanism, which involves the endonuclease activity cleaving the host capped pre-mRNAs. These short capped RNAs are then used as primers for viral transcription. The 3'-end of subgenomic mRNAs molecules are not polyadenylated. During replication, the polymerase binds the 5' and 3' vRNA extremities at distinct sites. In turn, significant conformational changes occur in the polymerase and in vRNA to initiate active RNA synthesis. As a consequence of the use of the same enzyme for both transcription and replication, these mechanisms need to be well coordinated. In Aedes (Bovine), this protein is RNA-directed RNA polymerase L.